The chain runs to 527 residues: Butyrophilin subfamily 2 member A1 (527 aa).

The first 28 residues, 1–28, serve as a signal peptide directing secretion; sequence MESAAALHFSRPASLLLLLLSLCALVSA. Residues 29–141 enclose the Ig-like V-type domain; that stretch reads QFIVVGPTDP…SYDEAILHLV (113 aa). The Extracellular segment spans residues 29–248; it reads QFIVVGPTDP…SFMPSVSPCA (220 aa). Residues asparagine 46, asparagine 114, and asparagine 120 are each glycosylated (N-linked (GlcNAc...) asparagine). Cysteine 51 and cysteine 125 are disulfide-bonded. Residues 249-269 traverse the membrane as a helical segment; that stretch reads VALPIIVVILMIPIAVCIYWI. The Cytoplasmic segment spans residues 270-527; it reads NKLQKEKKIL…LHRVGTHQSL (258 aa). In terms of domain architecture, B30.2/SPRY spans 310 to 506; that stretch reads VKEKLQEELR…IFICPALTGA (197 aa).

Belongs to the immunoglobulin superfamily. BTN/MOG family. Highly expressed in brain, bone marrow, small intestine, muscle, spleen and pancreas. Moderate expression was seen in lung, liver and kidney.

It localises to the membrane. This Homo sapiens (Human) protein is Butyrophilin subfamily 2 member A1 (BTN2A1).